Reading from the N-terminus, the 424-residue chain is Histidine--tRNA ligase (424 aa).

This sequence belongs to the class-II aminoacyl-tRNA synthetase family. Homodimer.

It localises to the cytoplasm. The enzyme catalyses tRNA(His) + L-histidine + ATP = L-histidyl-tRNA(His) + AMP + diphosphate + H(+). The protein is Histidine--tRNA ligase of Escherichia coli O139:H28 (strain E24377A / ETEC).